A 739-amino-acid chain; its full sequence is Endoglucanase F (739 aa).

Residues 1-27 (MKKILAFLLTVALVAVVAIPQAVVSFA) form the signal peptide. The interval 28-470 (ADFNYGEALQ…AKMYEKYGGE (443 aa)) is catalytic. The active-site Nucleophile is the Asp84. Catalysis depends on residues His400, Asp438, and Glu447. The region spanning 480–639 (TPGEEFYVEA…NVRVWGKVPD (160 aa)) is the CBM3 domain. The Dockerin domain maps to 664-737 (PGIMLGDVNF…ILKLIEKFPA (74 aa)).

Belongs to the glycosyl hydrolase 9 (cellulase E) family. It depends on Ca(2+) as a cofactor.

It carries out the reaction Endohydrolysis of (1-&gt;4)-beta-D-glucosidic linkages in cellulose, lichenin and cereal beta-D-glucans.. Its function is as follows. This enzyme catalyzes the endohydrolysis of 1,4-beta-glucosidic linkages in cellulose, lichenin and cereal beta-D-glucans. In Acetivibrio thermocellus (strain ATCC 27405 / DSM 1237 / JCM 9322 / NBRC 103400 / NCIMB 10682 / NRRL B-4536 / VPI 7372) (Clostridium thermocellum), this protein is Endoglucanase F (celF).